Here is a 109-residue protein sequence, read N- to C-terminus: Nucleoid-associated protein Sama_1311 (109 aa).

Belongs to the YbaB/EbfC family. As to quaternary structure, homodimer.

It is found in the cytoplasm. It localises to the nucleoid. In terms of biological role, binds to DNA and alters its conformation. May be involved in regulation of gene expression, nucleoid organization and DNA protection. The polypeptide is Nucleoid-associated protein Sama_1311 (Shewanella amazonensis (strain ATCC BAA-1098 / SB2B)).